Reading from the N-terminus, the 340-residue chain is Arginine N-succinyltransferase subunit beta (340 aa).

It belongs to the succinylarginine dihydrolase family. Heterotetramer of two alpha and two beta subunits.

It carries out the reaction succinyl-CoA + L-arginine = N(2)-succinyl-L-arginine + CoA + H(+). It functions in the pathway amino-acid degradation; L-arginine degradation via AST pathway; L-glutamate and succinate from L-arginine: step 1/5. This Pseudomonas aeruginosa (strain ATCC 15692 / DSM 22644 / CIP 104116 / JCM 14847 / LMG 12228 / 1C / PRS 101 / PAO1) protein is Arginine N-succinyltransferase subunit beta (aruG).